The following is a 423-amino-acid chain: Putative transmembrane protein ORF103 (423 aa).

The span at 43-57 (EPKIEQEEPQQKPEV) shows a compositional bias: basic and acidic residues. The segment at 43–91 (EPKIEQEEPQQKPEVVDVYSNETDKNEEEVSIITSEDEEEDEKGMLFKR) is disordered. The segment covering 67-84 (KNEEEVSIITSEDEEEDE) has biased composition (acidic residues). The next 2 helical transmembrane spans lie at 125 to 145 (IIGI…VAVL) and 162 to 182 (FSLC…GLAI). The tract at residues 253-282 (DESGSEVSSEDEESDQETLLRNRKMPTNSK) is disordered. 2 helical membrane passes run 326 to 346 (LISA…IVGS) and 366 to 386 (IPTL…MCVL).

The protein localises to the host membrane. This is Putative transmembrane protein ORF103 from Magallana gigas (Pacific oyster).